Consider the following 468-residue polypeptide: Cysteine--tRNA ligase (468 aa).

Residue C33 coordinates Zn(2+). The short motif at 35–45 is the 'HIGH' region element; sequence ATVQGLPHIGH. 3 residues coordinate Zn(2+): C211, H236, and E240. Residues 267 to 271 carry the 'KMSKS' region motif; that stretch reads KMSKS. K270 serves as a coordination point for ATP.

Belongs to the class-I aminoacyl-tRNA synthetase family. As to quaternary structure, monomer. Requires Zn(2+) as cofactor.

It is found in the cytoplasm. It carries out the reaction tRNA(Cys) + L-cysteine + ATP = L-cysteinyl-tRNA(Cys) + AMP + diphosphate. The protein is Cysteine--tRNA ligase of Mycobacterium marinum (strain ATCC BAA-535 / M).